Here is a 357-residue protein sequence, read N- to C-terminus: Protein phosphatase 1 regulatory subunit 42 (357 aa).

7 LRR repeats span residues 29–50, 51–72, 73–94, 95–116, 117–138, 147–168, and 169–190; these read KITH…SLCK, NLSV…NYAT, NLTH…RSLK, KLEK…EGLG, ELRE…LFDP, SLSI…EILE, and NLNQ…EFLL. The 39-residue stretch at 204–242 folds into the LRRCT domain; it reads NPVCLKPKYRDRLILVSKSLEFLDGKEIKNIERQFLMNW.

As to quaternary structure, interacts with PPP1CC isoform gamma-2; the interaction is direct. Interacts with actin, dynein, KIF5B, KIFC1 and tubulin. Associates with microtubules. Phosphorylated; in the testis.

The protein localises to the cytoplasm. Its subcellular location is the cytoskeleton. It is found in the microtubule organizing center. It localises to the centrosome. Functionally, regulates phosphatase activity of protein phosphatase 1 (PP1) complexes in the testis. The sequence is that of Protein phosphatase 1 regulatory subunit 42 (PPP1R42) from Macaca fascicularis (Crab-eating macaque).